The following is a 310-amino-acid chain: MPEELSKKQITRLNKLQKRLRREVGSAIADYNMIEDGDRVMCCLSGGKDSYAMLDILLNLQQRAPVQFEIIAVNLDQKQPGFPEHVLPAYLDSLNIPYHILEKDTYSIVKEKIPEGKTTCSLCSRLRRGTLYGFAQRIGATKIALGHHRDDIIETMFLNMFYGGKMKAMPPKLLSDDGANVVIRPLAYCREKDLEEYAELKKFPIIPCNLCGSQENLKRQAVKDMLNQWDRLYPGRIETIFTAMQNTAPSQGVDREQFDFVSLKRDPNAPMKGDVAEADLPAFDFLDIANSGHIDLDAAKRINIVNVYEA.

A PP-loop motif motif is present at residues 45 to 50; it reads SGGKDS. Positions 120, 123, and 211 each coordinate [4Fe-4S] cluster.

The protein belongs to the TtcA family. Homodimer. Mg(2+) is required as a cofactor. [4Fe-4S] cluster serves as cofactor.

It localises to the cytoplasm. It catalyses the reaction cytidine(32) in tRNA + S-sulfanyl-L-cysteinyl-[cysteine desulfurase] + AH2 + ATP = 2-thiocytidine(32) in tRNA + L-cysteinyl-[cysteine desulfurase] + A + AMP + diphosphate + H(+). It participates in tRNA modification. Functionally, catalyzes the ATP-dependent 2-thiolation of cytidine in position 32 of tRNA, to form 2-thiocytidine (s(2)C32). The sulfur atoms are provided by the cysteine/cysteine desulfurase (IscS) system. This is tRNA-cytidine(32) 2-sulfurtransferase from Shewanella sp. (strain ANA-3).